The sequence spans 306 residues: D-alanine--D-alanine ligase (306 aa).

Residues 101-300 (RIMLAAAGVP…FGELVTWMVE (200 aa)) form the ATP-grasp domain. ATP is bound at residue 128–182 (MPTPYVLKPNAGGSSVGVFIVREDQAHPPQELTREDWPHGENLLAEEFIPGLELT). Mg(2+) contacts are provided by Asp250, Glu267, and Asn269.

It belongs to the D-alanine--D-alanine ligase family. It depends on Mg(2+) as a cofactor. Mn(2+) is required as a cofactor.

It is found in the cytoplasm. It catalyses the reaction 2 D-alanine + ATP = D-alanyl-D-alanine + ADP + phosphate + H(+). It participates in cell wall biogenesis; peptidoglycan biosynthesis. Its function is as follows. Cell wall formation. This is D-alanine--D-alanine ligase from Xanthobacter autotrophicus (strain ATCC BAA-1158 / Py2).